The following is a 236-amino-acid chain: 1-(5-phosphoribosyl)-5-[(5-phosphoribosylamino)methylideneamino] imidazole-4-carboxamide isomerase (236 aa).

D8 functions as the Proton acceptor in the catalytic mechanism. D127 serves as the catalytic Proton donor.

The protein belongs to the HisA/HisF family.

Its subcellular location is the cytoplasm. The enzyme catalyses 1-(5-phospho-beta-D-ribosyl)-5-[(5-phospho-beta-D-ribosylamino)methylideneamino]imidazole-4-carboxamide = 5-[(5-phospho-1-deoxy-D-ribulos-1-ylimino)methylamino]-1-(5-phospho-beta-D-ribosyl)imidazole-4-carboxamide. Its pathway is amino-acid biosynthesis; L-histidine biosynthesis; L-histidine from 5-phospho-alpha-D-ribose 1-diphosphate: step 4/9. The sequence is that of 1-(5-phosphoribosyl)-5-[(5-phosphoribosylamino)methylideneamino] imidazole-4-carboxamide isomerase from Campylobacter fetus subsp. fetus (strain 82-40).